Consider the following 1218-residue polypeptide: Coatomer subunit alpha-1 (1218 aa).

WD repeat units follow at residues 7 to 48 (TKSN…DRFD), 49 to 88 (EHDGPVRGVHFHATQPLFVSGGDDYKIKVWNYKTHRCLFT), 91 to 132 (GHLD…AVLT), 133 to 172 (GHNHYVMCASFHPKEDLVVSASLDQTVRVWDIGALRKKTV), 202 to 241 (GHDRGVNWASFHPTLPLIVSGADDRQVKLWRMNDTKAWEV), 246 to 285 (GHMNNVSCVMFHAKQDIIVSNSEDKSIRIWDATKRTGIQT), 288 to 326 (REHDRFWILSAHPEMNLLAAGHDSGMIVFKLERERPAFS), 363 to 404 (SLNQ…AGRA), and 450 to 489 (PLPIATDAIYYAGTGNLLCKAEDRVTIFDLQQRLILGELQ). Positions 857 to 882 (NGGDGFDAEEGEANEEDGEEGGWDLE) are disordered. Acidic residues predominate over residues 862–882 (FDAEEGEANEEDGEEGGWDLE).

As to quaternary structure, oligomeric complex that consists of at least the alpha, beta, beta', gamma, delta, epsilon and zeta subunits.

Its subcellular location is the cytoplasm. The protein localises to the golgi apparatus membrane. The protein resides in the cytoplasmic vesicle. It is found in the COPI-coated vesicle membrane. Functionally, the coatomer is a cytosolic protein complex that binds to dilysine motifs and reversibly associates with Golgi non-clathrin-coated vesicles, which further mediate biosynthetic protein transport from the ER, via the Golgi up to the trans Golgi network. Coatomer complex is required for budding from Golgi membranes, and is essential for the retrograde Golgi-to-ER transport of dilysine-tagged proteins. The polypeptide is Coatomer subunit alpha-1 (Oryza sativa subsp. japonica (Rice)).